A 932-amino-acid chain; its full sequence is AP-3 complex subunit delta (932 aa).

Thr-2 carries the N-acetylthreonine modification. HEAT repeat units follow at residues Ser-157 to Glu-194, Leu-196 to Gln-231, Phe-233 to Lys-269, Leu-270 to Asp-307, Glu-310 to Thr-346, Asp-347 to Leu-384, Ala-386 to Lys-425, Lys-427 to Asp-466, Val-490 to Glu-527, Asn-528 to Asn-564, Lys-570 to Val-601, and Glu-602 to Leu-638. Phosphoserine occurs at positions 700 and 727. A disordered region spans residues Glu-720–Glu-868. Composition is skewed to basic and acidic residues over residues Glu-738 to Leu-747 and Ser-755 to Arg-766. Phosphothreonine is present on Thr-767. Low complexity predominate over residues Thr-767 to Thr-779. Ser-770 and Ser-773 each carry phosphoserine. The span at Arg-783 to Arg-793 shows a compositional bias: basic residues. Ser-798 bears the Phosphoserine mark. The segment covering Ala-806–Asn-832 has biased composition (basic and acidic residues). The segment covering Gln-838–Arg-855 has biased composition (polar residues). Positions Ser-857–Glu-868 are enriched in basic and acidic residues. A coiled-coil region spans residues Gln-858–Leu-878. Position 888 is a phosphoserine (Ser-888). The span at Lys-897–Ala-915 shows a compositional bias: basic residues. Residues Lys-897 to Ile-932 are disordered. Ser-918 carries the post-translational modification Phosphoserine. Over residues Glu-923 to Ile-932 the composition is skewed to basic and acidic residues.

This sequence belongs to the adaptor complexes large subunit family. Adaptor protein complex 3 (AP-3) is a heterotetramer composed of 2 large adaptins (APL5 and APL6), a medium adaptin (APM3) and a small adaptin (APS3). Interacts with VPS41.

The protein resides in the golgi apparatus. It is found in the cytoplasmic vesicle. Its subcellular location is the clathrin-coated vesicle membrane. Functionally, part of the AP-3 complex, an adaptor-related complex which is not clathrin-associated. The complex is associated with the Golgi region as well as more peripheral structures. It facilitates the budding of vesicles from the Golgi membrane and may be directly involved in trafficking to the vacuole. Required for the transport via the ALP pathway, which directs the transport of the cargo proteins PHO8 and VAM3 to the vacuole. In Saccharomyces cerevisiae (strain ATCC 204508 / S288c) (Baker's yeast), this protein is AP-3 complex subunit delta (APL5).